A 339-amino-acid chain; its full sequence is Anthranilate phosphoribosyltransferase (339 aa).

Residues Gly86, 89–90 (GD), Thr94, 96–99 (NIST), 114–122 (KHGNRGVSS), and Ser126 contribute to the 5-phospho-alpha-D-ribose 1-diphosphate site. Residue Gly86 participates in anthranilate binding. Ser98 contacts Mg(2+). Position 117 (Asn117) interacts with anthranilate. Arg172 contributes to the anthranilate binding site. The Mg(2+) site is built by Asp230 and Glu231.

It belongs to the anthranilate phosphoribosyltransferase family. As to quaternary structure, homodimer. Mg(2+) serves as cofactor.

The enzyme catalyses N-(5-phospho-beta-D-ribosyl)anthranilate + diphosphate = 5-phospho-alpha-D-ribose 1-diphosphate + anthranilate. Its pathway is amino-acid biosynthesis; L-tryptophan biosynthesis; L-tryptophan from chorismate: step 2/5. Its function is as follows. Catalyzes the transfer of the phosphoribosyl group of 5-phosphorylribose-1-pyrophosphate (PRPP) to anthranilate to yield N-(5'-phosphoribosyl)-anthranilate (PRA). This is Anthranilate phosphoribosyltransferase from Photobacterium profundum (strain SS9).